The following is a 245-amino-acid chain: Triosephosphate isomerase (245 aa).

9 to 11 (NWK) lines the substrate pocket. H92 serves as the catalytic Electrophile. E164 (proton acceptor) is an active-site residue. Residues G170, S209, and 230–231 (GG) each bind substrate.

It belongs to the triosephosphate isomerase family. In terms of assembly, homodimer.

The protein localises to the cytoplasm. It catalyses the reaction D-glyceraldehyde 3-phosphate = dihydroxyacetone phosphate. Its pathway is carbohydrate biosynthesis; gluconeogenesis. The protein operates within carbohydrate degradation; glycolysis; D-glyceraldehyde 3-phosphate from glycerone phosphate: step 1/1. Involved in the gluconeogenesis. Catalyzes stereospecifically the conversion of dihydroxyacetone phosphate (DHAP) to D-glyceraldehyde-3-phosphate (G3P). This Cupriavidus pinatubonensis (strain JMP 134 / LMG 1197) (Cupriavidus necator (strain JMP 134)) protein is Triosephosphate isomerase.